The sequence spans 161 residues: MQLLLLIPLHYRLKDSKRIYQIILNLGSLLRISSIRQDNMELLELIIDPMIKAEVIERVSEFLTKTLGKIIVKCNDTSGFIANRVGYFLLELVARKAISQNLDVATIDKIFTTFLGLPSTGIFGLYDLIGYDVMKLISSSLLASLPANDAYHKIICKDPCS.

This is an uncharacterized protein from Rickettsia conorii (strain ATCC VR-613 / Malish 7).